The sequence spans 288 residues: Tryptophan 2,3-dioxygenase (288 aa).

Residues 57-61 (FIIQH), Tyr-119, and Arg-123 contribute to the substrate site. His-246 is a heme binding site. Substrate is bound at residue Thr-260.

The protein belongs to the tryptophan 2,3-dioxygenase family. In terms of assembly, homotetramer. Requires heme as cofactor.

It carries out the reaction L-tryptophan + O2 = N-formyl-L-kynurenine. The protein operates within amino-acid degradation; L-tryptophan degradation via kynurenine pathway; L-kynurenine from L-tryptophan: step 1/2. Heme-dependent dioxygenase that catalyzes the oxidative cleavage of the L-tryptophan (L-Trp) pyrrole ring and converts L-tryptophan to N-formyl-L-kynurenine. Catalyzes the oxidative cleavage of the indole moiety. The protein is Tryptophan 2,3-dioxygenase of Pseudomonas aeruginosa (strain ATCC 15692 / DSM 22644 / CIP 104116 / JCM 14847 / LMG 12228 / 1C / PRS 101 / PAO1).